A 61-amino-acid polypeptide reads, in one-letter code: Small ribosomal subunit protein uS14 (61 aa).

The Zn(2+) site is built by Cys24, Cys27, Cys40, and Cys43.

Belongs to the universal ribosomal protein uS14 family. Zinc-binding uS14 subfamily. In terms of assembly, part of the 30S ribosomal subunit. Contacts proteins S3 and S10. Zn(2+) is required as a cofactor.

Binds 16S rRNA, required for the assembly of 30S particles and may also be responsible for determining the conformation of the 16S rRNA at the A site. This chain is Small ribosomal subunit protein uS14, found in Borreliella afzelii (strain PKo) (Borrelia afzelii).